Consider the following 61-residue polypeptide: Small ribosomal subunit protein uS14 (61 aa).

The span at 1 to 12 (MSESETTDEPDS) shows a compositional bias: acidic residues. The interval 1-25 (MSESETTDEPDSETASSERTGQLES) is disordered. Residues C26, C29, C44, and C47 each coordinate Zn(2+).

It belongs to the universal ribosomal protein uS14 family. Zinc-binding uS14 subfamily. As to quaternary structure, part of the 30S ribosomal subunit. Requires Zn(2+) as cofactor.

Functionally, binds 16S rRNA, required for the assembly of 30S particles. The sequence is that of Small ribosomal subunit protein uS14 from Haloarcula marismortui (strain ATCC 43049 / DSM 3752 / JCM 8966 / VKM B-1809) (Halobacterium marismortui).